The following is a 204-amino-acid chain: Urease accessory protein UreG (204 aa).

Residue 11–18 (GPVGAGKT) participates in GTP binding.

This sequence belongs to the SIMIBI class G3E GTPase family. UreG subfamily. Homodimer. UreD, UreF and UreG form a complex that acts as a GTP-hydrolysis-dependent molecular chaperone, activating the urease apoprotein by helping to assemble the nickel containing metallocenter of UreC. The UreE protein probably delivers the nickel.

Its subcellular location is the cytoplasm. Functionally, facilitates the functional incorporation of the urease nickel metallocenter. This process requires GTP hydrolysis, probably effectuated by UreG. The sequence is that of Urease accessory protein UreG from Staphylococcus epidermidis (strain ATCC 35984 / DSM 28319 / BCRC 17069 / CCUG 31568 / BM 3577 / RP62A).